Reading from the N-terminus, the 785-residue chain is Endonuclease MutS2 (785 aa).

335–342 (GPNTGGKT) lines the ATP pocket. One can recognise a Smr domain in the interval 710–785 (LDLRGERYED…GNGVTIVEFK (76 aa)).

This sequence belongs to the DNA mismatch repair MutS family. MutS2 subfamily. As to quaternary structure, homodimer. Binds to stalled ribosomes, contacting rRNA.

Endonuclease that is involved in the suppression of homologous recombination and thus may have a key role in the control of bacterial genetic diversity. Its function is as follows. Acts as a ribosome collision sensor, splitting the ribosome into its 2 subunits. Detects stalled/collided 70S ribosomes which it binds and splits by an ATP-hydrolysis driven conformational change. Acts upstream of the ribosome quality control system (RQC), a ribosome-associated complex that mediates the extraction of incompletely synthesized nascent chains from stalled ribosomes and their subsequent degradation. Probably generates substrates for RQC. This chain is Endonuclease MutS2, found in Listeria monocytogenes serovar 1/2a (strain ATCC BAA-679 / EGD-e).